A 278-amino-acid polypeptide reads, in one-letter code: tRNA (guanine-N(7)-)-methyltransferase (278 aa).

S-adenosyl-L-methionine contacts are provided by residues Gly-95, 118–119 (EI), 153–154 (NA), and Cys-173. Asp-176 is an active-site residue. 251-253 (TEE) serves as a coordination point for S-adenosyl-L-methionine.

This sequence belongs to the class I-like SAM-binding methyltransferase superfamily. TrmB family. In terms of assembly, forms a complex with TRM82.

Its subcellular location is the nucleus. It catalyses the reaction guanosine(46) in tRNA + S-adenosyl-L-methionine = N(7)-methylguanosine(46) in tRNA + S-adenosyl-L-homocysteine. The protein operates within tRNA modification; N(7)-methylguanine-tRNA biosynthesis. Its function is as follows. Catalyzes the formation of N(7)-methylguanine at position 46 (m7G46) in tRNA. In Kluyveromyces lactis (strain ATCC 8585 / CBS 2359 / DSM 70799 / NBRC 1267 / NRRL Y-1140 / WM37) (Yeast), this protein is tRNA (guanine-N(7)-)-methyltransferase.